The primary structure comprises 121 residues: Immunoglobulin kappa variable 4-1 (121 aa).

An N-terminal signal peptide occupies residues 1–20 (MVLQTQVFISLLLWISGAYG). The interval 21-43 (DIVMTQSPDSLAVSLGERATINC) is framework-1. Residues 21-121 (DIVMTQSPDS…YYCQQYYSTP (101 aa)) form the Ig-like domain. Cysteines 43 and 114 form a disulfide. Positions 44–60 (KSSQSVLYSSNNKNYLA) are complementarity-determining-1. The tract at residues 61-75 (WYQQKPGQPPKLLIY) is framework-2. The complementarity-determining-2 stretch occupies residues 76-82 (WASTRES). Residues 83–114 (GVPDRFSGSGSGTDFTLTISSLQAEDVAVYYC) form a framework-3 region. The complementarity-determining-3 stretch occupies residues 115 to 121 (QQYYSTP).

In terms of assembly, immunoglobulins are composed of two identical heavy chains and two identical light chains; disulfide-linked.

The protein resides in the secreted. It is found in the cell membrane. V segment of the variable domain of immunoglobulins light chain that participates in the antigen recognition. Immunoglobulins, also known as antibodies, are membrane-bound or secreted glycoproteins produced by B lymphocytes. In the recognition phase of humoral immunity, the membrane-bound immunoglobulins serve as receptors which, upon binding of a specific antigen, trigger the clonal expansion and differentiation of B lymphocytes into immunoglobulins-secreting plasma cells. Secreted immunoglobulins mediate the effector phase of humoral immunity, which results in the elimination of bound antigens. The antigen binding site is formed by the variable domain of one heavy chain, together with that of its associated light chain. Thus, each immunoglobulin has two antigen binding sites with remarkable affinity for a particular antigen. The variable domains are assembled by a process called V-(D)-J rearrangement and can then be subjected to somatic hypermutations which, after exposure to antigen and selection, allow affinity maturation for a particular antigen. The protein is Immunoglobulin kappa variable 4-1 of Homo sapiens (Human).